We begin with the raw amino-acid sequence, 739 residues long: MICOS complex subunit Mic60 (739 aa).

The tract at residues 23 to 63 (ANNRQFGGSSSGSGGREQGRRQQEEQGQQGDQGYQGYQSLP) is disordered. The segment covering 47-61 (EQGQQGDQGYQGYQS) has biased composition (low complexity). Residues 69–89 (AGFGKVVLFVSPLAAVGGVIT) traverse the membrane as a helical segment. A disordered region spans residues 154-219 (VTGLFGGGSG…PAAKPKDNPL (66 aa)). The span at 163–198 (GDDKSKKSKVEPVKATPAEEKRPSKPSEVSKTEAKP) shows a compositional bias: basic and acidic residues. Low complexity predominate over residues 199–212 (VSKPAAAAAPAPAA). A coiled-coil region spans residues 283–339 (TAVATAERAAREAQEKIVACEIALSAAATAQNAKKVEAVRDKIKKLVDHIGNVKDEL).

This sequence belongs to the MICOS complex subunit Mic60 family. As to quaternary structure, component of the mitochondrial contact site and cristae organizing system (MICOS) complex. Interacts with the mitochondria-shaping protein Opa1.

Its subcellular location is the mitochondrion inner membrane. In terms of biological role, component of the MICOS complex, a large protein complex of the mitochondrial inner membrane that plays crucial roles in the maintenance of crista junctions, inner membrane architecture, and formation of contact sites to the outer membrane. This is MICOS complex subunit Mic60 from Drosophila melanogaster (Fruit fly).